The following is a 124-amino-acid chain: Small ribosomal subunit protein uS13 (124 aa).

A disordered region spans residues 95–124 (GLPVRGQRTKTNARTRKGPKRTIAGKKKAR).

Belongs to the universal ribosomal protein uS13 family. Part of the 30S ribosomal subunit. Forms a loose heterodimer with protein S19. Forms two bridges to the 50S subunit in the 70S ribosome.

Located at the top of the head of the 30S subunit, it contacts several helices of the 16S rRNA. In the 70S ribosome it contacts the 23S rRNA (bridge B1a) and protein L5 of the 50S subunit (bridge B1b), connecting the 2 subunits; these bridges are implicated in subunit movement. Contacts the tRNAs in the A and P-sites. The protein is Small ribosomal subunit protein uS13 of Mycobacterium sp. (strain JLS).